The chain runs to 642 residues: Threonine--tRNA ligase (642 aa).

Positions 1–61 constitute a TGS domain; sequence MPIITLPDGS…EHDASLEIIT (61 aa). The interval 244–535 is catalytic; that stretch reads DHRKIGKQLD…LIEEYAGFFP (292 aa). The Zn(2+) site is built by C335, H386, and H512.

Belongs to the class-II aminoacyl-tRNA synthetase family. As to quaternary structure, homodimer. Zn(2+) serves as cofactor.

The protein resides in the cytoplasm. It carries out the reaction tRNA(Thr) + L-threonine + ATP = L-threonyl-tRNA(Thr) + AMP + diphosphate + H(+). Its function is as follows. Catalyzes the attachment of threonine to tRNA(Thr) in a two-step reaction: L-threonine is first activated by ATP to form Thr-AMP and then transferred to the acceptor end of tRNA(Thr). Also edits incorrectly charged L-seryl-tRNA(Thr). This is Threonine--tRNA ligase from Vibrio cholerae serotype O1 (strain ATCC 39541 / Classical Ogawa 395 / O395).